The primary structure comprises 346 residues: Phosphoribosylformylglycinamidine cyclo-ligase (346 aa).

This sequence belongs to the AIR synthase family.

The protein resides in the cytoplasm. The enzyme catalyses 2-formamido-N(1)-(5-O-phospho-beta-D-ribosyl)acetamidine + ATP = 5-amino-1-(5-phospho-beta-D-ribosyl)imidazole + ADP + phosphate + H(+). The protein operates within purine metabolism; IMP biosynthesis via de novo pathway; 5-amino-1-(5-phospho-D-ribosyl)imidazole from N(2)-formyl-N(1)-(5-phospho-D-ribosyl)glycinamide: step 2/2. This chain is Phosphoribosylformylglycinamidine cyclo-ligase, found in Erwinia tasmaniensis (strain DSM 17950 / CFBP 7177 / CIP 109463 / NCPPB 4357 / Et1/99).